The following is a 21-amino-acid chain: MKVKVDADACIGCGVCVELCP.

The 4Fe-4S ferredoxin-type domain maps to 2-21; it reads KVKVDADACIGCGVCVELCP. Residues C10, C13, and C16 each coordinate [4Fe-4S] cluster.

As to quaternary structure, monomer. It depends on [4Fe-4S] cluster as a cofactor.

Ferredoxins are iron-sulfur proteins that transfer electrons in a wide variety of metabolic reactions. The chain is Ferredoxin (fdxA) from Pyrococcus woesei.